Here is a 37-residue protein sequence, read N- to C-terminus: Large ribosomal subunit protein bL36 (37 aa).

This sequence belongs to the bacterial ribosomal protein bL36 family.

The sequence is that of Large ribosomal subunit protein bL36 from Synechococcus sp. (strain CC9605).